We begin with the raw amino-acid sequence, 317 residues long: Aspartate carbamoyltransferase catalytic subunit (317 aa).

2 residues coordinate carbamoyl phosphate: Arg66 and Thr67. L-aspartate is bound at residue Lys94. Carbamoyl phosphate-binding residues include Arg116, His144, and Gln147. L-aspartate-binding residues include Arg177 and Arg231. Carbamoyl phosphate contacts are provided by Gly272 and Pro273.

It belongs to the aspartate/ornithine carbamoyltransferase superfamily. ATCase family. As to quaternary structure, heterododecamer (2C3:3R2) of six catalytic PyrB chains organized as two trimers (C3), and six regulatory PyrI chains organized as three dimers (R2).

It catalyses the reaction carbamoyl phosphate + L-aspartate = N-carbamoyl-L-aspartate + phosphate + H(+). It functions in the pathway pyrimidine metabolism; UMP biosynthesis via de novo pathway; (S)-dihydroorotate from bicarbonate: step 2/3. In terms of biological role, catalyzes the condensation of carbamoyl phosphate and aspartate to form carbamoyl aspartate and inorganic phosphate, the committed step in the de novo pyrimidine nucleotide biosynthesis pathway. This Rhodopseudomonas palustris (strain HaA2) protein is Aspartate carbamoyltransferase catalytic subunit.